Here is a 353-residue protein sequence, read N- to C-terminus: Green-sensitive opsin-2 (353 aa).

Over 1-47 the chain is Extracellular; that stretch reads MAAHEPVFAARRHNEDTTRESAFVYTNANNTRDPFEGPNYHIAPRWV. N-linked (GlcNAc...) asparagine glycosylation is present at Asn-29. Residues 48 to 72 traverse the membrane as a helical segment; it reads YNVSSLWMIFVVIASVFTNGLVIVA. Over 73 to 84 the chain is Cytoplasmic; the sequence is TAKFKKLRHPLN. The chain crosses the membrane as a helical span at residues 85–110; the sequence is WILVNLAIADLGETVLASTISVINQI. Topologically, residues 111-124 are extracellular; that stretch reads FGYFILGHPMCVFE. Cys-121 and Cys-198 are disulfide-bonded. The helical transmembrane segment at 125 to 144 threads the bilayer; the sequence is GWTVSVCGITALWSLTIISW. The Cytoplasmic portion of the chain corresponds to 145-163; sequence ERWVVVCKPFGNVKFDGKW. The helical transmembrane segment at 164 to 187 threads the bilayer; that stretch reads AAGGIIFSWVWAIIWCTPPIFGWS. Over 188–213 the chain is Extracellular; it reads RYWPHGLKTSCGPDVFSGSEDPGVAS. A helical membrane pass occupies residues 214-241; sequence YMITLMLTCCILPLSIIIICYIFVWSAI. Topologically, residues 242 to 263 are cytoplasmic; the sequence is HQVAQQQKDSESTQKAEKEVSR. Residues 264–287 form a helical membrane-spanning segment; the sequence is MVVVMILAFIVCWGPYASFATFSA. The Extracellular segment spans residues 288–295; sequence VNPGYAWH. A helical membrane pass occupies residues 296 to 320; it reads PLAAAMPAYFAKSATIYNPIIYVFM. Lys-307 is modified (N6-(retinylidene)lysine). The Cytoplasmic segment spans residues 321 to 353; it reads NRQFRSCIMQLFGKKVEDASEVSGSTTEVSTAS.

Belongs to the G-protein coupled receptor 1 family. Opsin subfamily. As to expression, the color pigments are found in the cone photoreceptor cells.

Its subcellular location is the membrane. In terms of biological role, visual pigments are the light-absorbing molecules that mediate vision. They consist of an apoprotein, opsin, covalently linked to cis-retinal. The polypeptide is Green-sensitive opsin-2 (G101) (Psalidodon fasciatus (Banded astyanax)).